The following is a 270-amino-acid chain: Phosphatidylglycerol--prolipoprotein diacylglyceryl transferase (270 aa).

4 consecutive transmembrane segments (helical) span residues 19 to 39 (FPVY…LWLA), 53 to 73 (FVDL…AYYV), 92 to 112 (QGGL…IIYA), and 117 to 137 (ISFW…QAIG). Arginine 138 contacts a 1,2-diacyl-sn-glycero-3-phospho-(1'-sn-glycerol). 3 helical membrane-spanning segments follow: residues 178 to 198 (HPTF…LLLL), 206 to 226 (GELF…VEEL), and 236 to 256 (LRIA…FIIV).

It belongs to the Lgt family.

Its subcellular location is the cell membrane. It catalyses the reaction L-cysteinyl-[prolipoprotein] + a 1,2-diacyl-sn-glycero-3-phospho-(1'-sn-glycerol) = an S-1,2-diacyl-sn-glyceryl-L-cysteinyl-[prolipoprotein] + sn-glycerol 1-phosphate + H(+). It functions in the pathway protein modification; lipoprotein biosynthesis (diacylglyceryl transfer). In terms of biological role, catalyzes the transfer of the diacylglyceryl group from phosphatidylglycerol to the sulfhydryl group of the N-terminal cysteine of a prolipoprotein, the first step in the formation of mature lipoproteins. The chain is Phosphatidylglycerol--prolipoprotein diacylglyceryl transferase from Bacillus cytotoxicus (strain DSM 22905 / CIP 110041 / 391-98 / NVH 391-98).